The primary structure comprises 338 residues: Glycerol-3-phosphate dehydrogenase [NAD(P)+] (338 aa).

Positions 13, 14, and 108 each coordinate NADPH. Sn-glycerol 3-phosphate is bound by residues Lys-108, Gly-139, and Ser-141. NADPH is bound at residue Ala-143. Sn-glycerol 3-phosphate contacts are provided by Lys-194, Asp-247, Ser-257, Arg-258, and Asn-259. Lys-194 serves as the catalytic Proton acceptor. Position 258 (Arg-258) interacts with NADPH. Val-282 and Glu-284 together coordinate NADPH.

It belongs to the NAD-dependent glycerol-3-phosphate dehydrogenase family.

The protein localises to the cytoplasm. The catalysed reaction is sn-glycerol 3-phosphate + NAD(+) = dihydroxyacetone phosphate + NADH + H(+). It carries out the reaction sn-glycerol 3-phosphate + NADP(+) = dihydroxyacetone phosphate + NADPH + H(+). It participates in membrane lipid metabolism; glycerophospholipid metabolism. In terms of biological role, catalyzes the reduction of the glycolytic intermediate dihydroxyacetone phosphate (DHAP) to sn-glycerol 3-phosphate (G3P), the key precursor for phospholipid synthesis. The chain is Glycerol-3-phosphate dehydrogenase [NAD(P)+] from Streptococcus gordonii (strain Challis / ATCC 35105 / BCRC 15272 / CH1 / DL1 / V288).